The primary structure comprises 338 residues: Probable tRNA pseudouridine synthase B (338 aa).

Asp-78 (nucleophile) is an active-site residue. The PUA domain occupies 245-320 (LPKIILRDSA…IAASPIRVLM (76 aa)).

It belongs to the pseudouridine synthase TruB family. Type 2 subfamily.

The enzyme catalyses uridine(55) in tRNA = pseudouridine(55) in tRNA. Functionally, could be responsible for synthesis of pseudouridine from uracil-55 in the psi GC loop of transfer RNAs. The sequence is that of Probable tRNA pseudouridine synthase B from Methanosarcina mazei (strain ATCC BAA-159 / DSM 3647 / Goe1 / Go1 / JCM 11833 / OCM 88) (Methanosarcina frisia).